The following is a 632-amino-acid chain: MPTTFQEIPRKRPSTPLLDRAVTPVGLRRLGEAELETLADELRLELLYTVGQTGGHFGAGLGVIELTIALHYVFDTPDDRLVWDVGHQAYPHKILTGRREQMGTLRQKDGIAAFPRRAESEYDTFGVGHSSTSISAALGMAIAARLQGSDRKAIAVIGDGALTAGMAFEALNHAPEVDANMLVILNDNDMSISRNVGGLSNYLAKILSSRTYASMREGSKKVLSRLPGAWEIARRTEEYAKGMLVPGTLFEELGWNYIGPIDGHDLPTLIATLRNMRDLKGPQFLHIVTKKGKGFAPAEVDPIGYHAITKLDPLNAPAAAPKKASGPKYSGVFGEWLCDMAAADPRLVGITPAMKEGSDLVAFSERFPLRYFDVAIAEQHAVTFAAGMACEGAKPVVAIYSTFLQRGYDQLVHDVAVQNLDVLFAIDRAGLVGEDGPTHAGSFDLSYLRCIPGMLVMTPSDENELRKMLSTGHLYNGPAAVRYPRGNGPNAVIEKDLEPIEIGKGIVRRQGSKTAFLVFGVQLAEALKVAEKIDATVVDMRFVKPLDEALVREIAGGHELLVTVEENAIMGGAGAAVSEFLARENILKSVLHLGLPDVYVEHAKPAQMLAECGLDEAGIEASVRERMTLLAL.

Residues histidine 87 and 128 to 130 each bind thiamine diphosphate; that span reads GHS. Aspartate 159 contacts Mg(2+). Thiamine diphosphate contacts are provided by residues 160–161, asparagine 188, phenylalanine 295, and glutamate 378; that span reads GA. Asparagine 188 serves as a coordination point for Mg(2+).

Belongs to the transketolase family. DXPS subfamily. As to quaternary structure, homodimer. Mg(2+) is required as a cofactor. Thiamine diphosphate serves as cofactor.

It catalyses the reaction D-glyceraldehyde 3-phosphate + pyruvate + H(+) = 1-deoxy-D-xylulose 5-phosphate + CO2. Its pathway is metabolic intermediate biosynthesis; 1-deoxy-D-xylulose 5-phosphate biosynthesis; 1-deoxy-D-xylulose 5-phosphate from D-glyceraldehyde 3-phosphate and pyruvate: step 1/1. Its function is as follows. Catalyzes the acyloin condensation reaction between C atoms 2 and 3 of pyruvate and glyceraldehyde 3-phosphate to yield 1-deoxy-D-xylulose-5-phosphate (DXP). This chain is 1-deoxy-D-xylulose-5-phosphate synthase, found in Pseudomonas fluorescens (strain SBW25).